Here is a 221-residue protein sequence, read N- to C-terminus: Deoxyribose-phosphate aldolase (221 aa).

The active-site Proton donor/acceptor is Asp89. Residue Lys151 is the Schiff-base intermediate with acetaldehyde of the active site. The active-site Proton donor/acceptor is Lys180.

Belongs to the DeoC/FbaB aldolase family. DeoC type 1 subfamily.

The protein resides in the cytoplasm. It catalyses the reaction 2-deoxy-D-ribose 5-phosphate = D-glyceraldehyde 3-phosphate + acetaldehyde. The protein operates within carbohydrate degradation; 2-deoxy-D-ribose 1-phosphate degradation; D-glyceraldehyde 3-phosphate and acetaldehyde from 2-deoxy-alpha-D-ribose 1-phosphate: step 2/2. Its function is as follows. Catalyzes a reversible aldol reaction between acetaldehyde and D-glyceraldehyde 3-phosphate to generate 2-deoxy-D-ribose 5-phosphate. The sequence is that of Deoxyribose-phosphate aldolase from Mesomycoplasma hyopneumoniae (strain 232) (Mycoplasma hyopneumoniae).